The chain runs to 938 residues: Glutamate receptor ionotropic, NMDA 1 (938 aa).

Residues 1–18 (MSTMRLLTLALLFSCSVA) form the signal peptide. Over 19–559 (RAACDPKIVN…TLDSFMQPFQ (541 aa)) the chain is Extracellular. N-linked (GlcNAc...) asparagine glycans are attached at residues Asn61, Asn203, Asn239, Asn276, Asn300, Asn350, Asn368, Asn440, Asn471, and Asn491. An intrachain disulfide couples Cys79 to Cys308. Disulfide bonds link Cys420/Cys454 and Cys436/Cys455. Positions 516, 518, and 523 each coordinate glycine. A helical membrane pass occupies residues 560–580 (STLWLLVGLSVHVVAVMLYLL). Residues 581 to 604 (DRFSPFGRFKVNSEEEEEDALTLS) are Cytoplasmic-facing. The tract at residues 603-624 (LSSAMWFSWGVLLNSGIGEGAP) is pore-forming. Residues 605–615 (SAMWFSWGVLL) constitute an intramembrane region (discontinuously helical). At 616-627 (NSGIGEGAPRSF) the chain is on the cytoplasmic side. The chain crosses the membrane as a helical span at residues 628 to 648 (SARILGMVWAGFAMIIVASYT). Residues 649-811 (ANLAAFLVLD…SNAPATLTFE (163 aa)) lie on the Extracellular side of the membrane. N-linked (GlcNAc...) asparagine glycosylation is present at Asn674. Glycine-binding residues include Ser688 and Asp732. Cys744 and Cys798 form a disulfide bridge. An N-linked (GlcNAc...) asparagine glycan is attached at Asn771. Residues 812-835 (NMAGVFMLVAGGIVAGIFLIFIEI) traverse the membrane as a helical segment. The Cytoplasmic portion of the chain corresponds to 836 to 938 (AYKRHKDARR…LQLCSRHRES (103 aa)). Ser889, Ser890, Ser896, and Ser897 each carry phosphoserine; by PKC. Residues 889–938 (SSFKRRRSSKDTSTGGGRGALQNQKDTVLPRRAIEREEGQLQLCSRHRES) form a disordered region. Residues 916–927 (VLPRRAIEREEG) are compositionally biased toward basic and acidic residues.

This sequence belongs to the glutamate-gated ion channel (TC 1.A.10.1) family. NR1/GRIN1 subfamily. As to quaternary structure, heterotetramer; the NMDAR subunits are modular and harbor tiered domains that function in concert to regulate opening and closing of the cation-selective ion channel pore. Forms heterotetrameric channels composed of two GluN1/zeta subunits (GRIN1), and two identical GluN2/epsilon subunits (GRIN2A, GRIN2B, GRIN2C or GRIN2D) or GluN3 subunits (GRIN3A or GRIN3B) (in vitro). Can also form heterotetrameric channels that contain at least two GluN1 subunits and at least two different GluN2 subunits (or a combination of one GluN2 and one GluN3 subunits) (in vitro). In vivo, the subunit composition may vary in function of the expression levels of the different subunits. Found in a complex with GRIN2A or GRIN2B, GRIN3A and PPP2CB. Found in a complex with GRIN2A or GRIN2B and GRIN3B. Interacts with SNX27 (via PDZ domain); the interaction is required for recycling to the plasma membrane when endocytosed and prevent degradation in lysosomes. Interacts with DLG4 and MPDZ. Interacts with LRFN1 and LRFN2. Interacts with MYZAP. Found in a complex with DLG4 and PRR7. Found in a complex with GRIN2B and PRR7. Interacts with PRR7; the interaction is reduced following NMDA receptor activity. NMDA is probably regulated by C-terminal phosphorylation of an isoform of GRIN1 by PKC. Dephosphorylated on Ser-897 probably by protein phosphatase 2A (PPP2CB). Its phosphorylated state is influenced by the formation of the NMDAR-PPP2CB complex and the NMDAR channel activity.

It localises to the cell membrane. The protein localises to the postsynaptic cell membrane. The protein resides in the postsynaptic density membrane. Its subcellular location is the synaptic cell membrane. It carries out the reaction Ca(2+)(in) = Ca(2+)(out). The catalysed reaction is Na(+)(in) = Na(+)(out). It catalyses the reaction K(+)(in) = K(+)(out). Its activity is regulated as follows. NMDA glutamate receptor activity is inhbited by Mg2(+) in a voltage-dependent manner; Mg2(+)-induced blockade occurs only at negative potentials and decreases with membrane depolarization. 7-chlorokynurenate (50 uM) or Zn2(+) (100 uM) partially inhibit the NMDA glutamate receptor activity, while acide 2-amino-5-phosphonovalerique(100 uM) almost completely blocked the NMDA glutamate receptor activity. Dizocilpine (1 uM) results in long lasting and almost complete block of the NMDA glutamate receptor activity. Its function is as follows. Component of N-methyl-D-aspartate (NMDA) receptors (NMDARs) that function as heterotetrameric, ligand-gated cation channels with high calcium permeability and voltage-dependent block by Mg(2+). NMDARs participate in synaptic plasticity for learning and memory formation by contributing to the long-term potentiation (LTP). Channel activation requires binding of the neurotransmitter L-glutamate to the GluN2 subunit, glycine or D-serine binding to the GluN1 subunit, plus membrane depolarization to eliminate channel inhibition by Mg(2+). NMDARs mediate simultaneously the potasium efflux and the influx of calcium and sodium. Each GluN2 or GluN3 subunit confers differential attributes to channel properties, including activation, deactivation and desensitization kinetics, pH sensitivity, Ca2(+) permeability, and binding to allosteric modulators. The polypeptide is Glutamate receptor ionotropic, NMDA 1 (Homo sapiens (Human)).